The primary structure comprises 342 residues: Elongation factor Ts (342 aa).

The tract at residues 79 to 82 (TDFV) is involved in Mg(2+) ion dislocation from EF-Tu.

It belongs to the EF-Ts family.

The protein localises to the cytoplasm. In terms of biological role, associates with the EF-Tu.GDP complex and induces the exchange of GDP to GTP. It remains bound to the aminoacyl-tRNA.EF-Tu.GTP complex up to the GTP hydrolysis stage on the ribosome. The sequence is that of Elongation factor Ts (tsf) from Lactococcus lactis subsp. lactis (strain IL1403) (Streptococcus lactis).